A 350-amino-acid chain; its full sequence is Ion-translocating oxidoreductase complex subunit D (350 aa).

3 helical membrane passes run 36 to 56 (CYFF…IAVA), 89 to 109 (IPAL…ILVV), and 124 to 144 (AMAA…TWVA). T185 bears the FMN phosphoryl threonine mark. Helical transmembrane passes span 212–232 (GFGI…LVML), 239–259 (WQIS…GYLL), 265–285 (MGPL…FIAT), 298–318 (LIFG…CGYP), and 319–339 (DAFA…DYYV).

Belongs to the NqrB/RnfD family. In terms of assembly, the complex is composed of six subunits: RnfA, RnfB, RnfC, RnfD, RnfE and RnfG. It depends on FMN as a cofactor.

The protein resides in the cell inner membrane. Its function is as follows. Part of a membrane-bound complex that couples electron transfer with translocation of ions across the membrane. This Shewanella loihica (strain ATCC BAA-1088 / PV-4) protein is Ion-translocating oxidoreductase complex subunit D.